An 80-amino-acid polypeptide reads, in one-letter code: MTSRTDETANATALGYEQARDELIEVVRRLEAGGTTLEESLALWERGEELAKVCRTWLEGARKRLDAALAEEENAGDDSE.

It belongs to the XseB family. Heterooligomer composed of large and small subunits.

The protein resides in the cytoplasm. It catalyses the reaction Exonucleolytic cleavage in either 5'- to 3'- or 3'- to 5'-direction to yield nucleoside 5'-phosphates.. In terms of biological role, bidirectionally degrades single-stranded DNA into large acid-insoluble oligonucleotides, which are then degraded further into small acid-soluble oligonucleotides. In Streptomyces avermitilis (strain ATCC 31267 / DSM 46492 / JCM 5070 / NBRC 14893 / NCIMB 12804 / NRRL 8165 / MA-4680), this protein is Exodeoxyribonuclease 7 small subunit.